The primary structure comprises 292 residues: ATP synthase gamma chain (292 aa).

The protein belongs to the ATPase gamma chain family. As to quaternary structure, F-type ATPases have 2 components, CF(1) - the catalytic core - and CF(0) - the membrane proton channel. CF(1) has five subunits: alpha(3), beta(3), gamma(1), delta(1), epsilon(1). CF(0) has three main subunits: a, b and c.

It is found in the cell inner membrane. In terms of biological role, produces ATP from ADP in the presence of a proton gradient across the membrane. The gamma chain is believed to be important in regulating ATPase activity and the flow of protons through the CF(0) complex. This chain is ATP synthase gamma chain, found in Brucella ovis (strain ATCC 25840 / 63/290 / NCTC 10512).